A 466-amino-acid polypeptide reads, in one-letter code: E3 SUMO-protein ligase TRIM60 (466 aa).

Residues 15–56 (CYICSDFMEDPVTSRCGHNFCFACLRLLWDDLQGNIFCPVCQ) form an RING-type zinc finger. The segment at 91–132 (EEHTVCPKHDQPLVLFCVRDRDVLCTQCSLSVEHQGHYTCPI) adopts a B box-type zinc-finger fold. Zn(2+)-binding residues include cysteine 96, histidine 99, cysteine 118, and histidine 124. Residues 171-223 (LREEAQYQKIEIRYEIGQIKLFLQSEYEAHLNESHMEELRSFSELNGYLETLL) are a coiled coil. Residues 272–462 (LSLPAQYSGL…LEILTHPTPD (191 aa)) enclose the B30.2/SPRY domain.

Belongs to the TRIM/RBCC family.

E3 SUMO-protein ligase that mediates SUMOylation of TAB2 leading to inhibition of NF-kappa-B and MAPK pathways by suppressing the TRAF6/TAB2/TAK1 complex. The chain is E3 SUMO-protein ligase TRIM60 (Trim60) from Mus musculus (Mouse).